The sequence spans 907 residues: Polyphosphoinositide phosphatase (907 aa).

Residues 154–547 (FQNVDLSSNF…GDTLSLQYGG (394 aa)) enclose the SAC domain. The tract at residues 707-788 (GIDPSPFTVR…VKMTDAGDSA (82 aa)) is disordered. Acidic residues predominate over residues 758 to 770 (SEDDSGTDREEEG).

Component of the PI(3,5)P2 regulatory complex/PAS complex, at least composed of PIKFYVE, FIG4 and VAC14. VAC14 nucleates the assembly of the complex and serves as a scaffold by pentamerizing into a star-shaped structure, which can bind a single copy each of PIKFYVE and FIG4 and coordinates their activities.

The protein resides in the endosome membrane. It catalyses the reaction a 1,2-diacyl-sn-glycero-3-phospho-(1D-myo-inositol-3,5-bisphosphate) + H2O = a 1,2-diacyl-sn-glycero-3-phospho-(1D-myo-inositol-3-phosphate) + phosphate. The enzyme catalyses a 1,2-diacyl-sn-glycero-3-phospho-(1D-myo-inositol-4,5-bisphosphate) + H2O = a 1,2-diacyl-sn-glycero-3-phospho-(1D-myo-inositol 4-phosphate) + phosphate. The catalysed reaction is a 1,2-diacyl-sn-glycero-3-phospho-(1D-myo-inositol-3,4,5-trisphosphate) + H2O = a 1,2-diacyl-sn-glycero-3-phospho-(1D-myo-inositol-3,4-bisphosphate) + phosphate. It carries out the reaction O-phospho-L-seryl-[protein] + H2O = L-seryl-[protein] + phosphate. Dual specificity phosphatase component of the PI(3,5)P2 regulatory complex which regulates both the synthesis and turnover of phosphatidylinositol 3,5-bisphosphate (PtdIns(3,5)P2). Catalyzes the dephosphorylation of phosphatidylinositol 3,5-bisphosphate (PtdIns(3,5)P2) to form phosphatidylinositol 3-phosphate. Has serine-protein phosphatase activity acting on PIKfyve to stimulate its lipid kinase activity, its catalytically activity being required for maximal PI(3,5)P2 production. In vitro, hydrolyzes all three D5-phosphorylated polyphosphoinositide and although displaying preferences for PtdIns(3,5)P2, it is capable of hydrolyzing PtdIns(3,4,5)P3 and PtdIns(4,5)P2, at least in vitro. The sequence is that of Polyphosphoinositide phosphatase from Homo sapiens (Human).